A 187-amino-acid chain; its full sequence is MIVAKKYFLVLSFLFVQFALLPQAFSADKGWFDTLKDNVSETWQQPEHYDLYVPAITWHARFAYDKEKTDRYNERPWGAGFGQSRWDDKGNWHGLYIMAFKDSFNKWEPIGGYGWEKTWRPLADENFHMGLGFTAGATARDNWKYIPVPVLLPLASIGYGPATFQMTYIPGTYNNGNVYFAWMRFQF.

The signal sequence occupies residues 1–26 (MIVAKKYFLVLSFLFVQFALLPQAFS). Active-site residues include H59, D102, and S103.

The protein belongs to the lipid A palmitoyltransferase family. Homodimer.

Its subcellular location is the cell outer membrane. The enzyme catalyses a lipid A + a 1,2-diacyl-sn-glycero-3-phosphocholine = a hepta-acyl lipid A + a 2-acyl-sn-glycero-3-phosphocholine. The catalysed reaction is a lipid IVA + a 1,2-diacyl-sn-glycero-3-phosphocholine = a lipid IVB + a 2-acyl-sn-glycero-3-phosphocholine. It catalyses the reaction a lipid IIA + a 1,2-diacyl-sn-glycero-3-phosphocholine = a lipid IIB + a 2-acyl-sn-glycero-3-phosphocholine. Transfers a fatty acid residue from the sn-1 position of a phospholipid to the N-linked hydroxyfatty acid chain on the proximal unit of lipid A or its precursors. The chain is Lipid A acyltransferase PagP from Citrobacter koseri (strain ATCC BAA-895 / CDC 4225-83 / SGSC4696).